A 240-amino-acid chain; its full sequence is Anti-H(O) lectin (240 aa).

Asn-4 carries N-linked (GlcNAc...) asparagine glycosylation. Glu-124 and Asp-126 together coordinate Mn(2+). Ca(2+)-binding residues include Asp-126, Tyr-128, Asn-130, and Asp-133. Mn(2+) contacts are provided by Asp-133 and His-141.

Belongs to the leguminous lectin family.

In terms of biological role, L-fucose specific lectin. The polypeptide is Anti-H(O) lectin (Lotus tetragonolobus (Winged pea)).